The chain runs to 1331 residues: Probable serine/threonine-protein kinase DDB_G0272254 (1331 aa).

Low complexity-rich tracts occupy residues 1–42 (METS…NSSS), 96–116 (NDNN…NNNN), and 153–175 (TQQT…STPS). 3 disordered regions span residues 1-43 (METS…SSSA), 92-132 (DKIC…QQIS), and 150-175 (ILNT…STPS). 2 helical membrane passes run 201–221 (FGFS…IYIL) and 224–244 (FVLK…FVIY). A compositionally biased stretch (low complexity) spans 259 to 287 (SINDSDSSSNNNNNNNNTTTTNNDSASTK). 4 disordered regions span residues 259 to 300 (SIND…PETY), 320 to 419 (NLNN…LSKE), 435 to 464 (SVGK…SHNI), and 512 to 581 (AHSN…VVGN). Residues 288-299 (GNNNNEISSPET) are compositionally biased toward polar residues. The segment covering 436–450 (VGKTHNRSSSGSDSI) has biased composition (polar residues). A compositionally biased stretch (low complexity) spans 514-531 (SNNNNNNNNSNTNNNNNN). The segment covering 532 to 555 (QSVSAPVSQLATPVYQTPGTNSVV) has biased composition (polar residues). Residues 557 to 577 (NLENDNENNNDSFSDINDNNS) show a composition bias toward low complexity. 6 Kelch repeats span residues 665-710 (SLVL…NHDY), 716-769 (KFYL…RYGN), 770-816 (RFLL…GHTS), 822-868 (KLII…ELND), 909-959 (NIVM…LIKN), and 962-1008 (KLFI…NNNN). Positions 834-860 (NNNNNNNNNNNNNNNNNNNNNNNNNNN) are enriched in low complexity. A disordered region spans residues 834 to 862 (NNNNNNNNNNNNNNNNNNNNNNNNNNNKG). The segment at 976–1042 (NNNSSSGGNN…NNNNNNNNNN (67 aa)) is disordered. The region spanning 1073-1331 (IKIDKEIGKG…EITNYLTKTF (259 aa)) is the Protein kinase domain. ATP-binding positions include 1079–1087 (IGKGHFSKV) and Lys1100. Catalysis depends on Asp1200, which acts as the Proton acceptor.

Belongs to the protein kinase superfamily. TKL Ser/Thr protein kinase family.

The protein localises to the membrane. The enzyme catalyses L-seryl-[protein] + ATP = O-phospho-L-seryl-[protein] + ADP + H(+). It carries out the reaction L-threonyl-[protein] + ATP = O-phospho-L-threonyl-[protein] + ADP + H(+). In Dictyostelium discoideum (Social amoeba), this protein is Probable serine/threonine-protein kinase DDB_G0272254.